The sequence spans 276 residues: Putative pyruvate, phosphate dikinase regulatory protein (276 aa).

152–159 is a binding site for ADP; it reads GISRTSKT.

This sequence belongs to the pyruvate, phosphate/water dikinase regulatory protein family. PDRP subfamily.

It carries out the reaction N(tele)-phospho-L-histidyl/L-threonyl-[pyruvate, phosphate dikinase] + ADP = N(tele)-phospho-L-histidyl/O-phospho-L-threonyl-[pyruvate, phosphate dikinase] + AMP + H(+). The catalysed reaction is N(tele)-phospho-L-histidyl/O-phospho-L-threonyl-[pyruvate, phosphate dikinase] + phosphate + H(+) = N(tele)-phospho-L-histidyl/L-threonyl-[pyruvate, phosphate dikinase] + diphosphate. Its function is as follows. Bifunctional serine/threonine kinase and phosphorylase involved in the regulation of the pyruvate, phosphate dikinase (PPDK) by catalyzing its phosphorylation/dephosphorylation. The protein is Putative pyruvate, phosphate dikinase regulatory protein of Staphylococcus carnosus (strain TM300).